Here is a 301-residue protein sequence, read N- to C-terminus: Homoserine O-acetyltransferase (301 aa).

Residue Cys142 is the Acyl-thioester intermediate of the active site. Substrate is bound by residues Lys163 and Ser192. His235 serves as the catalytic Proton acceptor. Residue Glu237 is part of the active site. Substrate is bound at residue Arg249.

This sequence belongs to the MetA family.

It is found in the cytoplasm. It catalyses the reaction L-homoserine + acetyl-CoA = O-acetyl-L-homoserine + CoA. It participates in amino-acid biosynthesis; L-methionine biosynthesis via de novo pathway; O-acetyl-L-homoserine from L-homoserine: step 1/1. In terms of biological role, transfers an acetyl group from acetyl-CoA to L-homoserine, forming acetyl-L-homoserine. The sequence is that of Homoserine O-acetyltransferase from Lachnoclostridium phytofermentans (strain ATCC 700394 / DSM 18823 / ISDg) (Clostridium phytofermentans).